Reading from the N-terminus, the 514-residue chain is ATP synthase subunit alpha (514 aa).

170 to 177 (GDRQIGKT) serves as a coordination point for ATP.

This sequence belongs to the ATPase alpha/beta chains family. In terms of assembly, F-type ATPases have 2 components, CF(1) - the catalytic core - and CF(0) - the membrane proton channel. CF(1) has five subunits: alpha(3), beta(3), gamma(1), delta(1), epsilon(1). CF(0) has three main subunits: a(1), b(2) and c(9-12). The alpha and beta chains form an alternating ring which encloses part of the gamma chain. CF(1) is attached to CF(0) by a central stalk formed by the gamma and epsilon chains, while a peripheral stalk is formed by the delta and b chains.

The protein resides in the cell inner membrane. The catalysed reaction is ATP + H2O + 4 H(+)(in) = ADP + phosphate + 5 H(+)(out). Functionally, produces ATP from ADP in the presence of a proton gradient across the membrane. The alpha chain is a regulatory subunit. The polypeptide is ATP synthase subunit alpha (Pseudomonas fluorescens (strain SBW25)).